We begin with the raw amino-acid sequence, 163 residues long: NADH-quinone oxidoreductase subunit I (163 aa).

4Fe-4S ferredoxin-type domains are found at residues 55-84 (RRYP…IDAE) and 94-123 (TRYD…EGPN). Cys64, Cys67, Cys70, Cys74, Cys103, Cys106, Cys109, and Cys113 together coordinate [4Fe-4S] cluster.

This sequence belongs to the complex I 23 kDa subunit family. In terms of assembly, NDH-1 is composed of 14 different subunits. Subunits NuoA, H, J, K, L, M, N constitute the membrane sector of the complex. It depends on [4Fe-4S] cluster as a cofactor.

The protein resides in the cell inner membrane. It catalyses the reaction a quinone + NADH + 5 H(+)(in) = a quinol + NAD(+) + 4 H(+)(out). In terms of biological role, NDH-1 shuttles electrons from NADH, via FMN and iron-sulfur (Fe-S) centers, to quinones in the respiratory chain. The immediate electron acceptor for the enzyme in this species is believed to be ubiquinone. Couples the redox reaction to proton translocation (for every two electrons transferred, four hydrogen ions are translocated across the cytoplasmic membrane), and thus conserves the redox energy in a proton gradient. In Rhodobacter capsulatus (Rhodopseudomonas capsulata), this protein is NADH-quinone oxidoreductase subunit I (nuoI).